The following is a 333-amino-acid chain: Probable G-protein coupled receptor 174 (333 aa).

The Extracellular segment spans residues 1 to 27 (MPANYTCTRPDGDNTDFRYFIYAVTYT). Asn-4 carries N-linked (GlcNAc...) asparagine glycosylation. A helical membrane pass occupies residues 28-48 (VILVPGLIGNILALWVFYGYM). Residues 49–53 (KETKR) lie on the Cytoplasmic side of the membrane. Residues 54–74 (AVIFMINLAIADLLQVLSLPL) traverse the membrane as a helical segment. The Extracellular segment spans residues 75-91 (RIFYYLNHDWPFGPGLC). An intrachain disulfide couples Cys-91 to Cys-168. Residues 92–112 (MFCFYLKYVNMYASIYFLVCI) traverse the membrane as a helical segment. Over 113–134 (SVRRFWFLMYPFRFHDCKQKYD) the chain is Cytoplasmic. Residues 135–155 (LYISIAGWLIICLACVLFPLL) form a helical membrane-spanning segment. The Extracellular segment spans residues 156–182 (RTSDDTSGNRTKCFVDLPTRNVNLAQS). Residue Asn-164 is glycosylated (N-linked (GlcNAc...) asparagine). The chain crosses the membrane as a helical span at residues 183–203 (VVMMTIGELIGFVTPLLIVLY). The Cytoplasmic portion of the chain corresponds to 204 to 231 (CTWKTVLSLQDKYPMAQDLGEKQKALKM). The chain crosses the membrane as a helical span at residues 232-252 (ILTCAGVFLICFAPYHFSFPL). Residues 253 to 269 (DFLVKSNEIKSCLARRV) lie on the Extracellular side of the membrane. The helical transmembrane segment at 270–290 (ILIFHSVALCLASLNSCLDPV) threads the bilayer. The Cytoplasmic segment spans residues 291-333 (IYYFSTNEFRRRLSRQDLHDSIQLHAKSFVSNHTASTMTPELC).

It belongs to the G-protein coupled receptor 1 family. As to quaternary structure, interacts with GNA13. Interacts with CCL21.

The protein resides in the cell membrane. In terms of biological role, G-protein-coupled receptor of lysophosphatidylserine (LysoPS) that plays different roles in immune response. Plays a negative role in regulatory T-cell accumulation and homeostasis. Under inflammatory conditions where LysoPS production increases, contributes to the down-regulation of regulatory T-cell activity to favor effector response. Mediates the suppression of IL-2 production in activated T-lymphocytes leading to inhibition of growth, proliferation and differentiation of T-cells. Mechanistically, acts via G(s)-containing heterotrimeric G proteins to trigger elevated cyclic AMP levels and protein kinase A/PKA activity, which may in turn act to antagonize proximal TCR signaling. Plays an important role in the initial period of sepsis through the regulation of macrophage polarization and pro- and anti-inflammatory cytokine secretions. Upon testosterone treatment, acts as a receptor for CCL21 and subsequently triggers through G(q)-alpha and G(12)/G(13) proteins a calcium flux leading to chemotactic effects on activated B-cells. Signals via GNA13 and PKA to promote CD86 up-regulation by follicular B-cells. This Homo sapiens (Human) protein is Probable G-protein coupled receptor 174 (GPR174).